Consider the following 625-residue polypeptide: Probable potassium transport system protein Kup (625 aa).

Transmembrane regions (helical) follow at residues 10–30 (LAALTLAAVGIVYGDIGTSPL), 50–70 (LLGVVSLIVWGLIIIVSLKYV), 102–122 (YFPLMVMGLFGATLFYGDSVI), 135–155 (LGVATSAFDPYVVPVTVAILV), 172–192 (FGPVMLIWFITLAVMGVVNII), 214–234 (GFLAFIALGAVVLAFTGAEAL), 251–271 (FLIAFPALSLNYLGQGALLLL), 284–304 (LGAWSIYPLVALSTMAAIIAS), 340–360 (IYIPAVNWLQMIVVVLAVIGF), 369–389 (AYGIAVTATMMVTTVLTFFVI), 397–417 (LILCVAATGFFLVIDLSLFSA), and 422–442 (LFHGGWFPLLLGVVLFTLMLT).

It belongs to the HAK/KUP transporter (TC 2.A.72) family.

Its subcellular location is the cell inner membrane. The enzyme catalyses K(+)(in) + H(+)(in) = K(+)(out) + H(+)(out). In terms of biological role, transport of potassium into the cell. Likely operates as a K(+):H(+) symporter. This Herminiimonas arsenicoxydans protein is Probable potassium transport system protein Kup.